The following is a 184-amino-acid chain: ATP synthase subunit b, chloroplastic (184 aa).

A helical membrane pass occupies residues 27 to 49 (FATNPINLSVVLGVLIFFGKGVL).

Belongs to the ATPase B chain family. F-type ATPases have 2 components, F(1) - the catalytic core - and F(0) - the membrane proton channel. F(1) has five subunits: alpha(3), beta(3), gamma(1), delta(1), epsilon(1). F(0) has four main subunits: a(1), b(1), b'(1) and c(10-14). The alpha and beta chains form an alternating ring which encloses part of the gamma chain. F(1) is attached to F(0) by a central stalk formed by the gamma and epsilon chains, while a peripheral stalk is formed by the delta, b and b' chains.

The protein localises to the plastid. It is found in the chloroplast thylakoid membrane. Functionally, f(1)F(0) ATP synthase produces ATP from ADP in the presence of a proton or sodium gradient. F-type ATPases consist of two structural domains, F(1) containing the extramembraneous catalytic core and F(0) containing the membrane proton channel, linked together by a central stalk and a peripheral stalk. During catalysis, ATP synthesis in the catalytic domain of F(1) is coupled via a rotary mechanism of the central stalk subunits to proton translocation. Its function is as follows. Component of the F(0) channel, it forms part of the peripheral stalk, linking F(1) to F(0). The protein is ATP synthase subunit b, chloroplastic of Amborella trichopoda.